The following is an 887-amino-acid chain: Alpha-amylase 3, chloroplastic (887 aa).

A chloroplast-targeting transit peptide spans 1 to 55; it reads MSTVPIESLLHHSYLRHNSKVNRGNRSFIPISLNLRSHFTSNKLLHSIGKSVGVS. Cys499 and Cys587 form a disulfide bridge. Substrate-binding positions include 545 to 546 and 664 to 669; these read YM and RLDFVR. Asp666 acts as the Nucleophile in catalysis. The Proton donor role is filled by Glu691. Substrate contacts are provided by residues Trp693, Ser695, Gln712, Lys754, 760 to 762, His773, Gln779, Lys857, and Trp884; that span reads GWW.

The protein belongs to the glycosyl hydrolase 13 family. The cofactor is Ca(2+). In terms of tissue distribution, expressed in developing siliques.

The protein resides in the plastid. The protein localises to the chloroplast. The enzyme catalyses Endohydrolysis of (1-&gt;4)-alpha-D-glucosidic linkages in polysaccharides containing three or more (1-&gt;4)-alpha-linked D-glucose units.. With respect to regulation, redox-regulated, with the highest activity under reducing conditions. The midpoint redox potential is -329 mV. The disulfide bridge between Cys-499 and Cys-587 inhibits catalysis. Inhibited by CuCl(2) and H(2)O(2). Functionally, possesses endoamylolytic activity in vitro, but seems not required for breakdown of transitory starch in leaves. May be involved in the determination of the final structure of glucans by shortening long linear phospho-oligosaccharides in the chloroplast stroma. Can act on both soluble and insoluble glucan substrates to release small linear and branched malto-oligosaccharides. Works synergistically with beta-amylase toward efficient starch degradation. Has activity against p-nitrophenyl maltoheptaoside (BPNP-G7), amylopectin and beta-limit dextrin. Involved in stress-induced starch degradation. This Arabidopsis thaliana (Mouse-ear cress) protein is Alpha-amylase 3, chloroplastic.